We begin with the raw amino-acid sequence, 245 residues long: tRNA pseudouridine synthase A (245 aa).

Asp52 acts as the Nucleophile in catalysis. Tyr111 is a binding site for substrate.

Belongs to the tRNA pseudouridine synthase TruA family. As to quaternary structure, homodimer.

The catalysed reaction is uridine(38/39/40) in tRNA = pseudouridine(38/39/40) in tRNA. Its function is as follows. Formation of pseudouridine at positions 38, 39 and 40 in the anticodon stem and loop of transfer RNAs. This Bradyrhizobium sp. (strain BTAi1 / ATCC BAA-1182) protein is tRNA pseudouridine synthase A.